The chain runs to 252 residues: CD99 antigen-like protein 2 (252 aa).

The N-terminal stretch at 1-23 (MEKTLWTWTLLAVFSLLVVKGMS) is a signal peptide. The disordered stretch occupies residues 30–170 (DALGDDDDDE…DLDPADDNNY (141 aa)). Residues 57–68 (AAVKPTLKPVKP) show a composition bias toward low complexity. Over residues 96 to 120 (NDIKGKGKDSGKGDKEVGGGSRDDG) the composition is skewed to basic and acidic residues. The helical transmembrane segment at 178 to 198 (TIAGIVSAVAMALVGAVSSYI) threads the bilayer.

Belongs to the CD99 family.

Its subcellular location is the cell membrane. It localises to the cell junction. Functionally, may function as a homophilic adhesion molecule. The polypeptide is CD99 antigen-like protein 2 (cd99l2) (Danio rerio (Zebrafish)).